Here is a 243-residue protein sequence, read N- to C-terminus: Probable transcriptional regulatory protein LCABL_11860 (243 aa).

The tract at residues 1-23 (MSGHSKWHNIQGRKNAQDSKRGK) is disordered.

Belongs to the TACO1 family.

The protein localises to the cytoplasm. This chain is Probable transcriptional regulatory protein LCABL_11860, found in Lacticaseibacillus casei (strain BL23) (Lactobacillus casei).